We begin with the raw amino-acid sequence, 464 residues long: Fumarate hydratase class II (464 aa).

Substrate contacts are provided by residues 98–100, 129–132, 139–141, and T187; these read SGT, HPND, and SSN. H188 functions as the Proton donor/acceptor in the catalytic mechanism. S318 is a catalytic residue. Substrate-binding positions include S319 and 324–326; that span reads KVN.

It belongs to the class-II fumarase/aspartase family. Fumarase subfamily. As to quaternary structure, homotetramer.

It is found in the cytoplasm. It carries out the reaction (S)-malate = fumarate + H2O. Its pathway is carbohydrate metabolism; tricarboxylic acid cycle; (S)-malate from fumarate: step 1/1. In terms of biological role, involved in the TCA cycle. Catalyzes the stereospecific interconversion of fumarate to L-malate. The sequence is that of Fumarate hydratase class II from Haemophilus influenzae (strain ATCC 51907 / DSM 11121 / KW20 / Rd).